Consider the following 211-residue polypeptide: Thiamine-phosphate synthase (211 aa).

Residues 37–41 (QLREK) and Asn-69 each bind 4-amino-2-methyl-5-(diphosphooxymethyl)pyrimidine. Positions 70 and 89 each coordinate Mg(2+). Ser-108 lines the 4-amino-2-methyl-5-(diphosphooxymethyl)pyrimidine pocket. Residue 134–136 (TTT) participates in 2-[(2R,5Z)-2-carboxy-4-methylthiazol-5(2H)-ylidene]ethyl phosphate binding. Residue Lys-137 participates in 4-amino-2-methyl-5-(diphosphooxymethyl)pyrimidine binding. 2-[(2R,5Z)-2-carboxy-4-methylthiazol-5(2H)-ylidene]ethyl phosphate is bound by residues Gly-163 and 183–184 (VS).

This sequence belongs to the thiamine-phosphate synthase family. Mg(2+) serves as cofactor.

It catalyses the reaction 2-[(2R,5Z)-2-carboxy-4-methylthiazol-5(2H)-ylidene]ethyl phosphate + 4-amino-2-methyl-5-(diphosphooxymethyl)pyrimidine + 2 H(+) = thiamine phosphate + CO2 + diphosphate. The catalysed reaction is 2-(2-carboxy-4-methylthiazol-5-yl)ethyl phosphate + 4-amino-2-methyl-5-(diphosphooxymethyl)pyrimidine + 2 H(+) = thiamine phosphate + CO2 + diphosphate. The enzyme catalyses 4-methyl-5-(2-phosphooxyethyl)-thiazole + 4-amino-2-methyl-5-(diphosphooxymethyl)pyrimidine + H(+) = thiamine phosphate + diphosphate. Its pathway is cofactor biosynthesis; thiamine diphosphate biosynthesis; thiamine phosphate from 4-amino-2-methyl-5-diphosphomethylpyrimidine and 4-methyl-5-(2-phosphoethyl)-thiazole: step 1/1. Its function is as follows. Condenses 4-methyl-5-(beta-hydroxyethyl)thiazole monophosphate (THZ-P) and 2-methyl-4-amino-5-hydroxymethyl pyrimidine pyrophosphate (HMP-PP) to form thiamine monophosphate (TMP). The sequence is that of Thiamine-phosphate synthase from Enterococcus faecalis (strain ATCC 700802 / V583).